The chain runs to 123 residues: PTS system glucitol/sorbitol-specific EIIA component (123 aa).

A PTS EIIA type-5 domain is found at Val3 to Leu116. The Tele-phosphohistidine intermediate role is filled by His43. His43 is subject to Phosphohistidine; by HPr.

The protein resides in the cytoplasm. The phosphoenolpyruvate-dependent sugar phosphotransferase system (sugar PTS), a major carbohydrate active transport system, catalyzes the phosphorylation of incoming sugar substrates concomitantly with their translocation across the cell membrane. The enzyme II complex composed of SrlA, SrlB and SrlE is involved in glucitol/sorbitol transport. It can also use D-mannitol. This Escherichia coli (strain K12) protein is PTS system glucitol/sorbitol-specific EIIA component (srlB).